A 116-amino-acid chain; its full sequence is Putative gamma-glutamylcyclotransferase PH0828 (116 aa).

A substrate-binding site is contributed by 13-16; it reads YGTL. Glu76 serves as the catalytic Proton acceptor.

Belongs to the gamma-glutamylcyclotransferase family.

Functionally, putative gamma-glutamylcyclotransferase. In Pyrococcus horikoshii (strain ATCC 700860 / DSM 12428 / JCM 9974 / NBRC 100139 / OT-3), this protein is Putative gamma-glutamylcyclotransferase PH0828.